A 238-amino-acid polypeptide reads, in one-letter code: Protein shisa-3 homolog (238 aa).

Residues 1–21 form the signal peptide; that stretch reads MRALLALCLLLGWLRWGPAGA. Topologically, residues 22-98 are lumenal; that stretch reads QQSGEYCHGW…GITAQPVYVP (77 aa). The helical transmembrane segment at 99–119 threads the bilayer; that stretch reads FLIVGSIFIAFIILGSVVAIY. The Cytoplasmic segment spans residues 120–238; the sequence is CCTCLRPKEP…GKSCPDFSSS (119 aa). The disordered stretch occupies residues 151–173; sequence TSTSPRAPSRQSSTATSSSSTGG. The span at 159-173 shows a compositional bias: low complexity; that stretch reads SRQSSTATSSSSTGG.

Belongs to the shisa family.

The protein resides in the endoplasmic reticulum membrane. In terms of biological role, plays an essential role in the maturation of presomitic mesoderm cells by individual attenuation of both FGF and WNT signaling. In Homo sapiens (Human), this protein is Protein shisa-3 homolog (SHISA3).